Here is a 301-residue protein sequence, read N- to C-terminus: GPN-loop GTPase 3 (301 aa).

Gly13–Thr18 is a binding site for GTP. The short motif at Gly70–Asn72 is the Gly-Pro-Asn (GPN)-loop; involved in dimer interface element. Ser176 to Asp179 is a binding site for GTP. The segment at Ile212 to Val232 is disordered. Residues Ser223–Val232 are compositionally biased toward basic and acidic residues.

It belongs to the GPN-loop GTPase family. As to quaternary structure, heterodimers with GPN1 or GPN2. Binds to RNA polymerase II (RNAPII).

Its function is as follows. Small GTPase required for proper nuclear import of RNA polymerase II and III (RNAPII and RNAPIII). May act at an RNAP assembly step prior to nuclear import. In Gibberella zeae (strain ATCC MYA-4620 / CBS 123657 / FGSC 9075 / NRRL 31084 / PH-1) (Wheat head blight fungus), this protein is GPN-loop GTPase 3.